The chain runs to 565 residues: Glucose-6-phosphate isomerase (565 aa).

Catalysis depends on E373, which acts as the Proton donor. Residues H404 and K530 contribute to the active site.

It belongs to the GPI family.

The protein resides in the cytoplasm. It catalyses the reaction alpha-D-glucose 6-phosphate = beta-D-fructose 6-phosphate. It functions in the pathway carbohydrate biosynthesis; gluconeogenesis. The protein operates within carbohydrate degradation; glycolysis; D-glyceraldehyde 3-phosphate and glycerone phosphate from D-glucose: step 2/4. Catalyzes the reversible isomerization of glucose-6-phosphate to fructose-6-phosphate. The chain is Glucose-6-phosphate isomerase from Corynebacterium jeikeium (strain K411).